A 177-amino-acid chain; its full sequence is Large ribosomal subunit protein uL6 (177 aa).

It belongs to the universal ribosomal protein uL6 family. As to quaternary structure, part of the 50S ribosomal subunit.

Functionally, this protein binds to the 23S rRNA, and is important in its secondary structure. It is located near the subunit interface in the base of the L7/L12 stalk, and near the tRNA binding site of the peptidyltransferase center. This is Large ribosomal subunit protein uL6 from Rhizobium etli (strain CIAT 652).